A 906-amino-acid polypeptide reads, in one-letter code: Translation initiation factor IF-2 (906 aa).

Disordered regions lie at residues Ala-94–Ala-125, Glu-165–Lys-232, and Arg-270–Val-321. Composition is skewed to basic and acidic residues over residues Glu-165–Lys-176, Gly-222–Lys-232, and Arg-270–Ala-284. A compositionally biased stretch (basic residues) spans Gln-299 to Tyr-313. A tr-type G domain is found at Glu-405–Lys-574. The tract at residues Gly-414 to Thr-421 is G1. Gly-414–Thr-421 is a GTP binding site. Residues Gly-439–His-443 are G2. The G3 stretch occupies residues Asp-460–Gly-463. Residues Asp-460–His-464 and Asn-514–Asp-517 contribute to the GTP site. Residues Asn-514–Asp-517 are G4. Positions Ser-550 to His-552 are G5.

This sequence belongs to the TRAFAC class translation factor GTPase superfamily. Classic translation factor GTPase family. IF-2 subfamily.

It is found in the cytoplasm. In terms of biological role, one of the essential components for the initiation of protein synthesis. Protects formylmethionyl-tRNA from spontaneous hydrolysis and promotes its binding to the 30S ribosomal subunits. Also involved in the hydrolysis of GTP during the formation of the 70S ribosomal complex. The protein is Translation initiation factor IF-2 of Sulfurovum sp. (strain NBC37-1).